The primary structure comprises 312 residues: MEIIFYHPTFNTAWWVNALEKALPHARVREWKVGDNNPADYALVWQPPVEMLAGRRLKAVFALGAGVDAILSKLNAHPEMLDASIPLFRLEDTGMGLQMQEYAVSQVLHWFRRFDDYQALKNQALWKPLPEYTREEFSVGIMGAGVLGAKVAESLQAWGFPLRCWSRSRKSWPGVESYVGREELHAFLNQTRVLINLLPNTAQTVGIINSELLDQLPDGAYVLNLARGVHVQEADLLAALDSGKLKGAMLDVFSQEPLPQESPLWRHPRVAMTPHIAAVTRPAEAIDYISRTITQLEKGEPVTGQVDRARGY.

Arg-227 is a catalytic residue. The Proton donor role is filled by His-275.

Belongs to the D-isomer specific 2-hydroxyacid dehydrogenase family. GhrA subfamily.

Its subcellular location is the cytoplasm. The catalysed reaction is glycolate + NADP(+) = glyoxylate + NADPH + H(+). It carries out the reaction (R)-glycerate + NAD(+) = 3-hydroxypyruvate + NADH + H(+). It catalyses the reaction (R)-glycerate + NADP(+) = 3-hydroxypyruvate + NADPH + H(+). Functionally, catalyzes the NADPH-dependent reduction of glyoxylate and hydroxypyruvate into glycolate and glycerate, respectively. The chain is Glyoxylate/hydroxypyruvate reductase A from Salmonella enteritidis PT4 (strain P125109).